The primary structure comprises 803 residues: Translation initiation factor IF-2 (803 aa).

Disordered stretches follow at residues 95–125 (PVVEQKRETEPAPTQEVPLTSDTTNLNEKAE) and 138–209 (EVKE…KLEQ). Over residues 111–121 (VPLTSDTTNLN) the composition is skewed to polar residues. Positions 138-155 (EVKEEAKKTPSEKKETPK) are enriched in basic and acidic residues. Residues 156 to 167 (KGPRKETRRSRK) show a composition bias toward basic residues. Positions 168-188 (PDKEDKWEREELHMTKLVEER) are enriched in basic and acidic residues. One can recognise a tr-type G domain in the interval 302–471 (PRAPVVTIMG…LLQAEVLELK (170 aa)). The segment at 311 to 318 (GHVDHGKT) is G1. Residue 311 to 318 (GHVDHGKT) participates in GTP binding. Positions 336-340 (GITQH) are G2. A G3 region spans residues 357–360 (DTPG). GTP is bound by residues 357-361 (DTPGH) and 411-414 (NKID). Residues 411-414 (NKID) are G4. The tract at residues 447–449 (SAK) is G5.

The protein belongs to the TRAFAC class translation factor GTPase superfamily. Classic translation factor GTPase family. IF-2 subfamily.

Its subcellular location is the cytoplasm. Functionally, one of the essential components for the initiation of protein synthesis. Protects formylmethionyl-tRNA from spontaneous hydrolysis and promotes its binding to the 30S ribosomal subunits. Also involved in the hydrolysis of GTP during the formation of the 70S ribosomal complex. The chain is Translation initiation factor IF-2 from Coxiella burnetii (strain CbuG_Q212) (Coxiella burnetii (strain Q212)).